Consider the following 451-residue polypeptide: tRNA modification GTPase MnmE (451 aa).

(6S)-5-formyl-5,6,7,8-tetrahydrofolate is bound by residues R28, E85, and K124. The 154-residue stretch at 220–373 folds into the TrmE-type G domain; sequence GLYTVLVGPP…LKTRLRTLLL (154 aa). Position 230 (N230) interacts with K(+). GTP-binding positions include 230–235, 249–255, and 274–277; these read NVGKSS, TDVPGTT, and DTAG. S234 provides a ligand contact to Mg(2+). Residues T249, V251, and T254 each coordinate K(+). T255 is a Mg(2+) binding site. K451 is a (6S)-5-formyl-5,6,7,8-tetrahydrofolate binding site.

This sequence belongs to the TRAFAC class TrmE-Era-EngA-EngB-Septin-like GTPase superfamily. TrmE GTPase family. As to quaternary structure, homodimer. Heterotetramer of two MnmE and two MnmG subunits. The cofactor is K(+).

The protein localises to the cytoplasm. In terms of biological role, exhibits a very high intrinsic GTPase hydrolysis rate. Involved in the addition of a carboxymethylaminomethyl (cmnm) group at the wobble position (U34) of certain tRNAs, forming tRNA-cmnm(5)s(2)U34. This chain is tRNA modification GTPase MnmE, found in Xylella fastidiosa (strain Temecula1 / ATCC 700964).